Reading from the N-terminus, the 226-residue chain is Protein AF-9 homolog (226 aa).

One can recognise a YEATS domain in the interval 8-169 (RIKTLSVSRP…EEFFKILMSR (162 aa)). Residues 187-224 (QLEQEEIDRIEIGIEKVDKEIDELKQKLENLVKQEAIN) adopt a coiled-coil conformation.

In terms of assembly, component of the SWR1 chromatin-remodeling complex composed of at least ACT1, ARP4, RVB1, RVB2, ARP6, YAF9, VPS71, VPS72, SWC3, SWC4, SWC5, SWC7 and SWR1, and perhaps BDF1. Component of the NuA4 histone acetyltransferase complex composed of at least ACT1, ARP4, YAF9, VID21, SWC4, EAF3, EAF5, EAF6, EAF7, EPL1, ESA1, TRA1 and YNG2. Interacts with SWC4.

Its subcellular location is the cytoplasm. The protein localises to the nucleus. Its function is as follows. Component of the SWR1 complex which mediates the ATP-dependent exchange of histone H2A for the H2A variant HZT1 leading to transcriptional regulation of selected genes by chromatin remodeling. Component of the NuA4 histone acetyltransferase complex which is involved in transcriptional activation of selected genes principally by acetylation of nucleosomal histones H4 and H2A. The NuA4 complex is also involved in DNA repair. Yaf9 may also be required for viability in conditions in which the structural integrity of the spindle is compromised. The protein is Protein AF-9 homolog (YAF9) of Saccharomyces cerevisiae (strain ATCC 204508 / S288c) (Baker's yeast).